The primary structure comprises 462 residues: Exodeoxyribonuclease 7 large subunit (462 aa).

It belongs to the XseA family. In terms of assembly, heterooligomer composed of large and small subunits.

The protein localises to the cytoplasm. The catalysed reaction is Exonucleolytic cleavage in either 5'- to 3'- or 3'- to 5'-direction to yield nucleoside 5'-phosphates.. In terms of biological role, bidirectionally degrades single-stranded DNA into large acid-insoluble oligonucleotides, which are then degraded further into small acid-soluble oligonucleotides. The protein is Exodeoxyribonuclease 7 large subunit of Proteus mirabilis (strain HI4320).